Consider the following 193-residue polypeptide: Fe/S biogenesis protein NfuA (193 aa).

Positions 149 and 152 each coordinate [4Fe-4S] cluster.

The protein belongs to the NfuA family. Homodimer. Requires [4Fe-4S] cluster as cofactor.

Functionally, involved in iron-sulfur cluster biogenesis. Binds a 4Fe-4S cluster, can transfer this cluster to apoproteins, and thereby intervenes in the maturation of Fe/S proteins. Could also act as a scaffold/chaperone for damaged Fe/S proteins. This chain is Fe/S biogenesis protein NfuA, found in Psychromonas ingrahamii (strain DSM 17664 / CCUG 51855 / 37).